The following is a 112-amino-acid chain: uncharacterized protein (112 aa).

Residues 82–104 (IFFGFSIIASYFLKFHLLYVILL) form a helical membrane-spanning segment.

The protein localises to the membrane. This is an uncharacterized protein from Pasteurella multocida (strain Pm70).